The sequence spans 862 residues: MSSPASTPSRRSSRRGRVTPTQSLRSEESRSSPNRRRRGEDSSTGELLPMPTSPGADLQSPPAQNALFSSPPQMHSLAIPLDFDVSSPLTYGTPSSRVEGTPRSGVRGTPVRQRPDLGSARKGLQVDLQSDGAAAEDIVPSEQSLGQKLVIWGTDVNVATCKENFQRFLQCFTDPLAKEEENVGIDITQPLYMQQLGEINITGEPFLNVNCEHIKSFSKNLYRQLISYPQEVIPTFDMAVNEIFFDRYPDSILEHQIQVRPFNALKTKSMRNLNPEDIDQLITISGMVIRTSQLIPEMQEAFFQCQVCAHTTRVEIDRGRIAEPCSCVHCHTTHSMALIHNRSFFSDKQMIKLQESPEDMPAGQTPHTIVLFAHNDLVDKVQPGDRVNVTGIYRAVPIRVNPRVSNVKSVYKTHIDVIHYRKTDAKRLHGLDEEAEQKLFSEKRVKLLKELSRKPDIYERLASALAPSIYEHEDIKKGILLQLFGGTRKDFSHTGRGKFRAEINILLCGDPGTSKSQLLQYVYNLVPRGQYTSGKGSSAVGLTAYVMKDPETRQLVLQTGALVLSDNGICCIDEFDKMNESTRSVLHEVMEQQTLSIAKAGIICQLNARTSVLAAANPIESQWNPKKTTIENIQLPHTLLSRFDLIFLMLDPQDEAYDRRLAHHLVSLYYQSEEQVEEEFLDMAVLKDYIAYAHSTIMPRLSEEASQALIEAYVNMRKIGSSRGMVSAYPRQLESLIRLAEAHAKVRFSNKVEAIDVEEAKRLHREALKQSATDPRTGIVDISILTTGMSATSRKRKEELAEALRKLILSKGKTPALKYQQLFEDIRGQSDTAITKDMFEEALRALADDDFLTVTGKTVRLL.

Over residues 1–10 (MSSPASTPSR) the composition is skewed to low complexity. Disordered regions lie at residues 1 to 71 (MSSP…FSSP) and 90 to 121 (TYGTPSSRVEGTPRSGVRGTPVRQRPDLGSAR). The residue at position 2 (Ser2) is an N-acetylserine. Ser6 is modified (phosphoserine). Phosphothreonine is present on residues Thr7 and Thr19. Phosphoserine is present on residues Ser26, Ser31, and Ser32. The segment covering 61-71 (PPAQNALFSSP) has biased composition (polar residues). The residue at position 101 (Thr101) is a Phosphothreonine. Phosphoserine is present on Ser104. Thr109 carries the phosphothreonine modification. A phosphoserine mark is found at Ser119, Ser130, Ser141, and Ser144. Position 219 is an N6-acetyllysine (Lys219). Residue Lys438 forms a Glycyl lysine isopeptide (Lys-Gly) (interchain with G-Cter in SUMO2) linkage. The residue at position 449 (Lys449) is an N6-acetyllysine. Residues 457 to 666 (IYERLASALA…YDRRLAHHLV (210 aa)) enclose the MCM domain. The ATP site is built by Tyr470, Arg496, Lys515, Ser516, Asn617, Arg642, Arg731, and Glu734. The Arginine finger motif lies at 641–644 (SRFD). Lys797 is covalently cross-linked (Glycyl lysine isopeptide (Lys-Gly) (interchain with G-Cter in SUMO2)). Lys857 carries the N6-acetyllysine modification.

It belongs to the MCM family. As to quaternary structure, component of the MCM2-7 complex. The complex forms a toroidal hexameric ring with the proposed subunit order MCM2-MCM6-MCM4-MCM7-MCM3-MCM5. Component of the CMG helicase complex, a hexameric ring of related MCM2-7 subunits stabilized by CDC45 and the tetrameric GINS complex. Interacts with MCMBP. In terms of processing, sumoylated; SUMO2 modified in response to stress caused by inhibition of proteasome activity (in vitro).

It is found in the nucleus. The protein resides in the chromosome. It carries out the reaction ATP + H2O = ADP + phosphate + H(+). Functionally, acts as a component of the MCM2-7 complex (MCM complex) which is the replicative helicase essential for 'once per cell cycle' DNA replication initiation and elongation in eukaryotic cells. Core component of CDC45-MCM-GINS (CMG) helicase, the molecular machine that unwinds template DNA during replication, and around which the replisome is built. The active ATPase sites in the MCM2-7 ring are formed through the interaction surfaces of two neighboring subunits such that a critical structure of a conserved arginine finger motif is provided in trans relative to the ATP-binding site of the Walker A box of the adjacent subunit. The six ATPase active sites, however, are likely to contribute differentially to the complex helicase activity. This Mus musculus (Mouse) protein is DNA replication licensing factor MCM4 (Mcm4).